The primary structure comprises 103 residues: Large ribosomal subunit protein uL24 (103 aa).

The protein belongs to the universal ribosomal protein uL24 family. As to quaternary structure, part of the 50S ribosomal subunit.

In terms of biological role, one of two assembly initiator proteins, it binds directly to the 5'-end of the 23S rRNA, where it nucleates assembly of the 50S subunit. Functionally, one of the proteins that surrounds the polypeptide exit tunnel on the outside of the subunit. The chain is Large ribosomal subunit protein uL24 from Haemophilus influenzae (strain 86-028NP).